Consider the following 200-residue polypeptide: Molybdenum cofactor guanylyltransferase (200 aa).

GTP is bound by residues 10–12 (LAG), lysine 23, asparagine 51, aspartate 69, and aspartate 99. Position 99 (aspartate 99) interacts with Mg(2+).

Belongs to the MobA family. As to quaternary structure, monomer. Mg(2+) serves as cofactor.

Its subcellular location is the cytoplasm. The enzyme catalyses Mo-molybdopterin + GTP + H(+) = Mo-molybdopterin guanine dinucleotide + diphosphate. In terms of biological role, transfers a GMP moiety from GTP to Mo-molybdopterin (Mo-MPT) cofactor (Moco or molybdenum cofactor) to form Mo-molybdopterin guanine dinucleotide (Mo-MGD) cofactor. This is Molybdenum cofactor guanylyltransferase from Shewanella halifaxensis (strain HAW-EB4).